We begin with the raw amino-acid sequence, 130 residues long: Albumin-1 F (130 aa).

The N-terminal stretch at 1–26 (MASVKLASLIVLFATLGMFLTKNVGA) is a signal peptide. 3 disulfides stabilise this stretch: Cys29–Cys46, Cys33–Cys48, and Cys41–Cys58. Propeptides lie at residues 64-69 (VFLRTN) and 123-130 (LLKSVSTA).

The C-terminal glycine may be removed from PA1b.

Functionally, PA1b binds to basic 7S globulin (BG) and stimulates its phosphorylation activity. Involved in the signal transduction system to regulate the growth and differentiation as a hormone peptide. Toxic to various insects through binding to a high affinity binding site in the insect gut. This is Albumin-1 F from Pisum sativum (Garden pea).